We begin with the raw amino-acid sequence, 283 residues long: Pantothenate synthetase (283 aa).

34 to 41 (MGALHEGH) provides a ligand contact to ATP. His-41 serves as the catalytic Proton donor. Gln-65 is a (R)-pantoate binding site. Position 65 (Gln-65) interacts with beta-alanine. Residue 152–155 (GQKD) participates in ATP binding. Gln-158 contacts (R)-pantoate. Residues Val-181 and 189-192 (MSSR) contribute to the ATP site.

It belongs to the pantothenate synthetase family. Homodimer.

It localises to the cytoplasm. It carries out the reaction (R)-pantoate + beta-alanine + ATP = (R)-pantothenate + AMP + diphosphate + H(+). The protein operates within cofactor biosynthesis; (R)-pantothenate biosynthesis; (R)-pantothenate from (R)-pantoate and beta-alanine: step 1/1. In terms of biological role, catalyzes the condensation of pantoate with beta-alanine in an ATP-dependent reaction via a pantoyl-adenylate intermediate. In Nitrobacter winogradskyi (strain ATCC 25391 / DSM 10237 / CIP 104748 / NCIMB 11846 / Nb-255), this protein is Pantothenate synthetase.